Reading from the N-terminus, the 374-residue chain is Putative glutamate--cysteine ligase 2 (374 aa).

The protein belongs to the glutamate--cysteine ligase type 2 family. YbdK subfamily.

It catalyses the reaction L-cysteine + L-glutamate + ATP = gamma-L-glutamyl-L-cysteine + ADP + phosphate + H(+). ATP-dependent carboxylate-amine ligase which exhibits weak glutamate--cysteine ligase activity. This chain is Putative glutamate--cysteine ligase 2, found in Acidovorax ebreus (strain TPSY) (Diaphorobacter sp. (strain TPSY)).